Consider the following 231-residue polypeptide: uncharacterized protein (231 aa).

Residues 1-17 (MFGKILTTSLLIAMTFA) form the signal peptide. Residues 197–231 (KARKQQKNEGDDEETEDEQKIGSAIDGWVERQAKL) are disordered.

This is an uncharacterized protein from Caenorhabditis elegans.